The chain runs to 354 residues: NADH-quinone oxidoreductase subunit H (354 aa).

A run of 8 helical transmembrane segments spans residues 22–42 (ILIRAVIIVVPLLLCVAYLIL), 91–111 (YLIAPLMVLMPAVAVWAVIPF), 124–144 (LLYVMAISSVGVYGVILAGWA), 168–188 (MGFALVTVLMVAGSLNLSAIV), 203–223 (ILSWNWLPLLPMFGVYFISGV), 255–275 (LFFLAEYINMIIISTMTALMF), 291–311 (IPGFFWLVIKVFLLLSVFIWI), and 326–346 (LGWKVFIPLTVAWLIIVAIWI).

Belongs to the complex I subunit 1 family. In terms of assembly, NDH-1 is composed of 14 different subunits. Subunits NuoA, H, J, K, L, M, N constitute the membrane sector of the complex.

Its subcellular location is the cell inner membrane. The enzyme catalyses a quinone + NADH + 5 H(+)(in) = a quinol + NAD(+) + 4 H(+)(out). Functionally, NDH-1 shuttles electrons from NADH, via FMN and iron-sulfur (Fe-S) centers, to quinones in the respiratory chain. The immediate electron acceptor for the enzyme in this species is believed to be ubiquinone. Couples the redox reaction to proton translocation (for every two electrons transferred, four hydrogen ions are translocated across the cytoplasmic membrane), and thus conserves the redox energy in a proton gradient. This subunit may bind ubiquinone. This chain is NADH-quinone oxidoreductase subunit H, found in Cupriavidus necator (strain ATCC 17699 / DSM 428 / KCTC 22496 / NCIMB 10442 / H16 / Stanier 337) (Ralstonia eutropha).